The primary structure comprises 285 residues: MIKSNLVISSLAIVSSMSYAGVEFSNPSGQLGEPANYTQFANILSASELQISDPNGKKGNKEYFALDNDFTGIVNDNFYVDKQSQALVFKMANDHLRNELRVQKNFRTDLPDHFYTLYANVEILHPLQSMANSTSKQNEITFLQVHNKGLDDQGTHNVPHPLLRVVWKENNQGVKGHFWAITKNNAVICKGSFGKKNKDKEMCRADVAYSKIDLGPAPTDKGTDFTITVGNKTLAIDVNGQRKVEKNIDYWRHLLSYFKAGVYNQFTQGESEAHFNQLRYQVNTP.

A signal peptide spans 1–20 (MIKSNLVISSLAIVSSMSYA).

Belongs to the polysaccharide lyase 6 family.

The catalysed reaction is Eliminative cleavage of alginate to give oligosaccharides with 4-deoxy-alpha-L-erythro-hex-4-enuronosyl groups at their non-reducing ends and beta-D-mannuronate at their reducing end.. The chain is Alginate lyase (alxM) from Photobacterium sp. (strain ATCC 43367).